The following is a 213-amino-acid chain: Thymidylate kinase (213 aa).

Residue 10–17 (GLEGAGKT) coordinates ATP.

The protein belongs to the thymidylate kinase family.

It catalyses the reaction dTMP + ATP = dTDP + ADP. Phosphorylation of dTMP to form dTDP in both de novo and salvage pathways of dTTP synthesis. This is Thymidylate kinase from Escherichia coli O157:H7 (strain EC4115 / EHEC).